We begin with the raw amino-acid sequence, 586 residues long: Dolichyl-diphosphooligosaccharide--protein glycosyltransferase subunit 1 (586 aa).

The N-terminal stretch at 1-15 (MRLLFAIALLGAVFA) is a signal peptide. At 16-421 (EDAWKAANVD…EFEFVDMLRE (406 aa)) the chain is on the lumenal side. The helical transmembrane segment at 422–442 (PLLASAFFFSLFFVIIVYSRF) threads the bilayer. Topologically, residues 443–586 (DFTISSDPAK…NRADSVLASI (144 aa)) are cytoplasmic.

It belongs to the OST1 family. As to quaternary structure, component of the oligosaccharyltransferase (OST) complex.

The protein resides in the endoplasmic reticulum membrane. It localises to the cytoplasmic granule. It functions in the pathway protein modification; protein glycosylation. Subunit of the oligosaccharyl transferase (OST) complex that catalyzes the initial transfer of a defined glycan (Glc(3)Man(9)GlcNAc(2) in eukaryotes) from the lipid carrier dolichol-pyrophosphate to an asparagine residue within an Asn-X-Ser/Thr consensus motif in nascent polypeptide chains, the first step in protein N-glycosylation. N-glycosylation occurs cotranslationally and the complex associates with the Sec61 complex at the channel-forming translocon complex that mediates protein translocation across the endoplasmic reticulum (ER). All subunits are required for a maximal enzyme activity. This is Dolichyl-diphosphooligosaccharide--protein glycosyltransferase subunit 1 from Caenorhabditis elegans.